Here is a 209-residue protein sequence, read N- to C-terminus: Protein lin-28 homolog A (209 aa).

The segment at Met-1–Ala-31 is disordered. N-acetylglycine is present on Gly-2. Ser-3 is modified (phosphoserine). The CSD domain maps to His-39–Pro-112. The flexible linker stretch occupies residues Gly-113–Gly-136. At Ser-120 the chain carries Phosphoserine. CCHC-type zinc fingers lie at residues Asp-137–Leu-154 and Lys-159–Leu-176. The tract at residues Ala-178 to Asn-209 is disordered. Ser-200 carries the post-translational modification Phosphoserine.

This sequence belongs to the lin-28 family. In terms of assembly, monomer. During skeletal muscle differentiation, associated with translation initiation complexes in the polysomal compartment. Directly interacts with EIF3S2. Interacts with NCL in an RNA-dependent manner. Interacts (via C-terminus) with DHX9 (via N- and C-terminus); this interaction occurs in a RNA-independent manner. Interacts with TUT4 in the presence of pre-let-7 RNA. As to expression, expressed in embryonic stem cells, placenta and testis. Tends to be up-regulated in HER2-overexpressing breast tumors.

It is found in the cytoplasm. The protein localises to the rough endoplasmic reticulum. It localises to the P-body. The protein resides in the stress granule. Its subcellular location is the nucleus. It is found in the nucleolus. Its function is as follows. RNA-binding protein that inhibits processing of pre-let-7 miRNAs and regulates translation of mRNAs that control developmental timing, pluripotency and metabolism. Seems to recognize a common structural G-quartet (G4) feature in its miRNA and mRNA targets. 'Translational enhancer' that drives specific mRNAs to polysomes and increases the efficiency of protein synthesis. Its association with the translational machinery and target mRNAs results in an increased number of initiation events per molecule of mRNA and, indirectly, in mRNA stabilization. Binds IGF2 mRNA, MYOD1 mRNA, ARBP/36B4 ribosomal protein mRNA and its own mRNA. Essential for skeletal muscle differentiation program through the translational up-regulation of IGF2 expression. Suppressor of microRNA (miRNA) biogenesis, including that of let-7, miR107, miR-143 and miR-200c. Specifically binds the miRNA precursors (pre-miRNAs), recognizing an 5'-GGAG-3' motif found in pre-miRNA terminal loop, and recruits TUT4 and TUT7 uridylyltransferases. This results in the terminal uridylation of target pre-miRNAs. Uridylated pre-miRNAs fail to be processed by Dicer and undergo degradation. The repression of let-7 expression is required for normal development and contributes to maintain the pluripotent state by preventing let-7-mediated differentiation of embryonic stem cells. Localized to the periendoplasmic reticulum area, binds to a large number of spliced mRNAs and inhibits the translation of mRNAs destined for the ER, reducing the synthesis of transmembrane proteins, ER or Golgi lumen proteins, and secretory proteins. Binds to and enhances the translation of mRNAs for several metabolic enzymes, such as PFKP, PDHA1 or SDHA, increasing glycolysis and oxidative phosphorylation. Which, with the let-7 repression may enhance tissue repair in adult tissue. This chain is Protein lin-28 homolog A (LIN28A), found in Homo sapiens (Human).